A 490-amino-acid polypeptide reads, in one-letter code: GTPase Der (490 aa).

EngA-type G domains follow at residues 3 to 166 (PVVA…MDDV) and 203 to 376 (IKLA…DSST). GTP is bound by residues 9–16 (GRPNVGKS), 56–60 (DTGGI), 118–121 (NKTD), 209–216 (GRPNVGKS), 256–260 (DTAGV), and 321–324 (NKWD). In terms of domain architecture, KH-like spans 377-461 (RRVSTAMLTR…PIRIQFKEGE (85 aa)).

The protein belongs to the TRAFAC class TrmE-Era-EngA-EngB-Septin-like GTPase superfamily. EngA (Der) GTPase family. Associates with the 50S ribosomal subunit.

GTPase that plays an essential role in the late steps of ribosome biogenesis. This chain is GTPase Der, found in Salmonella gallinarum (strain 287/91 / NCTC 13346).